Reading from the N-terminus, the 56-residue chain is Large ribosomal subunit protein bL33 (56 aa).

Basic and acidic residues predominate over residues 1–12; it reads MASKGGRDKIKL. The tract at residues 1–30 is disordered; the sequence is MASKGGRDKIKLESTAGTGHFYTTTKNKRT. The segment covering 15–25 has biased composition (polar residues); it reads TAGTGHFYTTT.

This sequence belongs to the bacterial ribosomal protein bL33 family.

This Ralstonia nicotianae (strain ATCC BAA-1114 / GMI1000) (Ralstonia solanacearum) protein is Large ribosomal subunit protein bL33.